The chain runs to 92 residues: Small ribosomal subunit protein uS19 (92 aa).

The protein belongs to the universal ribosomal protein uS19 family.

Its function is as follows. Protein S19 forms a complex with S13 that binds strongly to the 16S ribosomal RNA. In Bifidobacterium adolescentis (strain ATCC 15703 / DSM 20083 / NCTC 11814 / E194a), this protein is Small ribosomal subunit protein uS19.